The primary structure comprises 100 residues: Small ribosomal subunit protein bS18c (100 aa).

The span at 1-19 shows a compositional bias: basic residues; it reads MDKSKRPFRKSKRSFRRRL. The disordered stretch occupies residues 1-23; the sequence is MDKSKRPFRKSKRSFRRRLPPIG.

This sequence belongs to the bacterial ribosomal protein bS18 family. Part of the 30S ribosomal subunit.

The protein localises to the plastid. Its subcellular location is the chloroplast. This is Small ribosomal subunit protein bS18c from Calycanthus floridus var. glaucus (Eastern sweetshrub).